Here is a 300-residue protein sequence, read N- to C-terminus: Manganese-binding lipoprotein MntA (300 aa).

Positions 1-19 (MKKVCFSFVIMVIALIAAG) are cleaved as a signal peptide. Cys-20 is lipidated: N-palmitoyl cysteine. Cys-20 carries the S-diacylglycerol cysteine lipid modification. The Mn(2+) site is built by His-68, His-130, Glu-196, and Asp-271.

The protein belongs to the bacterial solute-binding protein 9 family.

The protein resides in the cell membrane. Functionally, probably part of ATP-binding cassette (ABC) transport system MntABCD involved in manganese import. Binds manganese and delivers it to the membrane permease for translocation into the cytoplasm. This Halalkalibacterium halodurans (strain ATCC BAA-125 / DSM 18197 / FERM 7344 / JCM 9153 / C-125) (Bacillus halodurans) protein is Manganese-binding lipoprotein MntA (mntA).